Reading from the N-terminus, the 91-residue chain is Small ribosomal subunit protein bS18 (91 aa).

The protein belongs to the bacterial ribosomal protein bS18 family. As to quaternary structure, part of the 30S ribosomal subunit. Forms a tight heterodimer with protein bS6.

Binds as a heterodimer with protein bS6 to the central domain of the 16S rRNA, where it helps stabilize the platform of the 30S subunit. This is Small ribosomal subunit protein bS18 from Wolbachia pipientis wMel.